Reading from the N-terminus, the 26-residue chain is GTP-binding protein Rheb (26 aa).

5 residues coordinate GTP: Ser1, Ser2, Val13, Tyr16, and Thr19. Ser1 is a binding site for Mg(2+). The Effector region signature appears at 16 to 24 (YDPTIENTF). Thr19 lines the Mg(2+) pocket.

It belongs to the small GTPase superfamily. Rheb family.

It carries out the reaction GTP + H2O = GDP + phosphate + H(+). In terms of biological role, binds GTP and exhibits intrinsic GTPase activity. The sequence is that of GTP-binding protein Rheb from Crocodylus siamensis (Siamese crocodile).